Consider the following 420-residue polypeptide: Mannose-1-phosphate guanylyltransferase regulatory subunit alpha (420 aa).

Residues 2 to 251 are substrate-binding domain; it reads LKAVILIGGP…DGIWSQIKSA (250 aa). Residues glutamate 85 and glutamine 247 each coordinate GDP-alpha-D-mannose. A hexapeptide repeat domain region spans residues 273–420; sequence LAKHTPGGPW…SRSFTNQIIL (148 aa). The tract at residues 356–384 is C-loop; the sequence is TPSDPNPNDPRARMDSESLFKDGKLLPAI.

It belongs to the transferase hexapeptide repeat family. As to quaternary structure, component of the GMPPA-GMPPB mannose-1-phosphate guanylyltransferase complex composed of 4 GMPPA subunits and 8 GMPPB subunits; the complex is organized into three layers, a central layer made up of 2 GMPPA dimers sandwiched between two layers each made up of 2 GMPPB dimers. Expressed in fibroblasts (at protein level).

It is found in the cytoplasm. Functionally, regulatory subunit of the GMPPA-GMPPB mannose-1-phosphate guanylyltransferase complex; reduces the catalytic activity of GMPPB when part of the complex. Mediates allosteric feedback inhibition of GMPPB catalytic activity upon binding GDP-alpha-D-mannose. Together with GMPPB regulates GDP-alpha-D-mannose levels. The sequence is that of Mannose-1-phosphate guanylyltransferase regulatory subunit alpha from Homo sapiens (Human).